The chain runs to 485 residues: NADH-quinone oxidoreductase subunit N (485 aa).

The next 14 membrane-spanning stretches (helical) occupy residues 10-30 (AMLP…SIAW), 35-55 (FINA…LYFV), 75-95 (FYIG…YPWL), 104-124 (EFYL…SANH), 125-145 (LASL…LIGY), 159-179 (YMLL…LLYA), 203-223 (ILAG…LVPF), 235-255 (PAPV…AVVM), 271-291 (LVLS…AISQ), 297-317 (LLGY…VAVQ), 327-347 (GVYL…VSLM), 374-394 (AVMT…GFIG), 408-427 (WWLT…YYLR), and 449-469 (ALTA…VLGI).

It belongs to the complex I subunit 2 family. In terms of assembly, NDH-1 is composed of 13 different subunits. Subunits NuoA, H, J, K, L, M, N constitute the membrane sector of the complex.

The protein resides in the cell inner membrane. The catalysed reaction is a quinone + NADH + 5 H(+)(in) = a quinol + NAD(+) + 4 H(+)(out). In terms of biological role, NDH-1 shuttles electrons from NADH, via FMN and iron-sulfur (Fe-S) centers, to quinones in the respiratory chain. The immediate electron acceptor for the enzyme in this species is believed to be ubiquinone. Couples the redox reaction to proton translocation (for every two electrons transferred, four hydrogen ions are translocated across the cytoplasmic membrane), and thus conserves the redox energy in a proton gradient. This is NADH-quinone oxidoreductase subunit N from Yersinia enterocolitica serotype O:8 / biotype 1B (strain NCTC 13174 / 8081).